The chain runs to 464 residues: Citrate synthase, mitochondrial (464 aa).

Residues 1–27 constitute a mitochondrion transit peptide; the sequence is MALLTAATRLLGAKNSSCLVLAARHAS. The short motif at 2 to 21 is the SIFI-degron element; sequence ALLTAATRLLGAKNSSCLVL. Position 57 is an N6-succinyllysine (lysine 57). Lysine 76 carries the post-translational modification N6-acetyllysine; alternate. At lysine 76 the chain carries N6-succinyllysine; alternate. N6-succinyllysine occurs at positions 103 and 193. Serine 226 carries the phosphoserine modification. Histidine 301 is an active-site residue. An N6-acetyllysine; alternate mark is found at lysine 321 and lysine 327. N6-succinyllysine; alternate is present on residues lysine 321 and lysine 327. The active site involves histidine 347. Arginine 356 lines the oxaloacetate pocket. At lysine 375 the chain carries N6-acetyllysine; alternate. Lysine 375 carries the N6-succinyllysine; alternate modification. Lysine 382 bears the N6-acetyllysine mark. Lysine 393 is subject to N6-acetyllysine; alternate. Lysine 393 is subject to N6-succinyllysine; alternate. The residue at position 395 (lysine 395) is an N6,N6,N6-trimethyllysine. The active site involves aspartate 402. Residues arginine 428 and arginine 448 each coordinate oxaloacetate. At lysine 450 the chain carries N6-succinyllysine. An N6-acetyllysine; alternate modification is found at lysine 459. An N6-succinyllysine; alternate modification is found at lysine 459.

It belongs to the citrate synthase family. Homodimer. Post-translationally, methylated. Trimethylation at Lys-395 by CSKMT decreases citrate synthase activity. In response to mitochondrial stress, the precursor protein is ubiquitinated by the SIFI complex in the cytoplasm before mitochondrial import, leading to its degradation. Within the SIFI complex, UBR4 initiates ubiquitin chain that are further elongated or branched by KCMF1.

It is found in the mitochondrion matrix. The enzyme catalyses oxaloacetate + acetyl-CoA + H2O = citrate + CoA + H(+). The protein operates within carbohydrate metabolism; tricarboxylic acid cycle; isocitrate from oxaloacetate: step 1/2. Its function is as follows. Key enzyme of the Krebs tricarboxylic acid cycle which catalyzes the synthesis of citrate from acetyl coenzyme A and oxaloacetate. This chain is Citrate synthase, mitochondrial (Cs), found in Mus musculus (Mouse).